The sequence spans 224 residues: LexA repressor (224 aa).

Residues 29-49 (RAEIARALGFRSPNAAEDHLK) constitute a DNA-binding region (H-T-H motif). Active-site for autocatalytic cleavage activity residues include S142 and K179.

This sequence belongs to the peptidase S24 family. In terms of assembly, homodimer.

It catalyses the reaction Hydrolysis of Ala-|-Gly bond in repressor LexA.. Its function is as follows. Represses a number of genes involved in the response to DNA damage (SOS response), including recA and lexA. In the presence of single-stranded DNA, RecA interacts with LexA causing an autocatalytic cleavage which disrupts the DNA-binding part of LexA, leading to derepression of the SOS regulon and eventually DNA repair. The chain is LexA repressor from Bordetella petrii (strain ATCC BAA-461 / DSM 12804 / CCUG 43448).